Reading from the N-terminus, the 303-residue chain is UDP-N-acetylenolpyruvoylglucosamine reductase (303 aa).

An FAD-binding PCMH-type domain is found at 27–207 (KVGGISQVFY…TSISQKLQKI (181 aa)). R175 is an active-site residue. Catalysis depends on S224, which acts as the Proton donor. E294 is an active-site residue.

This sequence belongs to the MurB family. Requires FAD as cofactor.

Its subcellular location is the cytoplasm. It catalyses the reaction UDP-N-acetyl-alpha-D-muramate + NADP(+) = UDP-N-acetyl-3-O-(1-carboxyvinyl)-alpha-D-glucosamine + NADPH + H(+). The protein operates within cell wall biogenesis; peptidoglycan biosynthesis. Cell wall formation. The sequence is that of UDP-N-acetylenolpyruvoylglucosamine reductase from Orientia tsutsugamushi (strain Boryong) (Rickettsia tsutsugamushi).